The chain runs to 413 residues: Serine hydroxymethyltransferase (413 aa).

(6S)-5,6,7,8-tetrahydrofolate-binding positions include leucine 120 and 124–126 (GHL). Position 229 is an N6-(pyridoxal phosphate)lysine (lysine 229). 352–354 (SPF) provides a ligand contact to (6S)-5,6,7,8-tetrahydrofolate.

The protein belongs to the SHMT family. Homodimer. Pyridoxal 5'-phosphate is required as a cofactor.

It is found in the cytoplasm. The catalysed reaction is (6R)-5,10-methylene-5,6,7,8-tetrahydrofolate + glycine + H2O = (6S)-5,6,7,8-tetrahydrofolate + L-serine. The protein operates within one-carbon metabolism; tetrahydrofolate interconversion. It participates in amino-acid biosynthesis; glycine biosynthesis; glycine from L-serine: step 1/1. In terms of biological role, catalyzes the reversible interconversion of serine and glycine with tetrahydrofolate (THF) serving as the one-carbon carrier. This reaction serves as the major source of one-carbon groups required for the biosynthesis of purines, thymidylate, methionine, and other important biomolecules. Also exhibits THF-independent aldolase activity toward beta-hydroxyamino acids, producing glycine and aldehydes, via a retro-aldol mechanism. This is Serine hydroxymethyltransferase from Heliobacterium modesticaldum (strain ATCC 51547 / Ice1).